A 75-amino-acid polypeptide reads, in one-letter code: Small ribosomal subunit protein bS18 (75 aa).

It belongs to the bacterial ribosomal protein bS18 family. In terms of assembly, part of the 30S ribosomal subunit. Forms a tight heterodimer with protein bS6.

In terms of biological role, binds as a heterodimer with protein bS6 to the central domain of the 16S rRNA, where it helps stabilize the platform of the 30S subunit. This Methylobacillus flagellatus (strain ATCC 51484 / DSM 6875 / VKM B-1610 / KT) protein is Small ribosomal subunit protein bS18.